A 192-amino-acid chain; its full sequence is uncharacterized protein (192 aa).

Residues 29–160 form the Nudix hydrolase domain; sequence QRQAAVLIPV…PLDVYRRGNS (132 aa). Residues 67–89 carry the Nudix box motif; sequence GAVDSTDASLIAAALREAQEEVA. Residues E83 and E87 each contribute to the Mg(2+) site.

This sequence belongs to the Nudix hydrolase family. PCD1 subfamily. Mn(2+) serves as cofactor. Requires Mg(2+) as cofactor.

Functionally, probably mediates the hydrolysis of some nucleoside diphosphate derivatives. This is an uncharacterized protein from Salmonella dublin (strain CT_02021853).